Here is a 264-residue protein sequence, read N- to C-terminus: Transcription factor bHLH52 (264 aa).

Positions 134–183 (RELSAQSIAARKRRRRITEKTQELGKLIPGSQKHNTAEMFNAAAKYVKFL) constitute a bHLH domain.

Homodimer. As to expression, expressed constitutively in roots, leaves, stems, and flowers.

The protein resides in the nucleus. This is Transcription factor bHLH52 (BHLH52) from Arabidopsis thaliana (Mouse-ear cress).